The following is a 383-amino-acid chain: Acetylornithine deacetylase (383 aa).

H80 is a Zn(2+) binding site. The active site involves D82. Position 112 (D112) interacts with Zn(2+). Residue E144 is part of the active site. Zn(2+) is bound by residues E145, E169, and H355.

It belongs to the peptidase M20A family. ArgE subfamily. Homodimer. Zn(2+) serves as cofactor. Requires Co(2+) as cofactor. The cofactor is glutathione.

It is found in the cytoplasm. The catalysed reaction is N(2)-acetyl-L-ornithine + H2O = L-ornithine + acetate. It participates in amino-acid biosynthesis; L-arginine biosynthesis; L-ornithine from N(2)-acetyl-L-ornithine (linear): step 1/1. Functionally, catalyzes the hydrolysis of the amide bond of N(2)-acetylated L-amino acids. Cleaves the acetyl group from N-acetyl-L-ornithine to form L-ornithine, an intermediate in L-arginine biosynthesis pathway, and a branchpoint in the synthesis of polyamines. This chain is Acetylornithine deacetylase, found in Pectobacterium carotovorum subsp. carotovorum (strain PC1).